The chain runs to 403 residues: Chalcone synthase 2 (403 aa).

59 to 66 contributes to the CoA binding site; sequence RFQRMCES. Residue Cys-168 is the Acyl-thioester intermediate of the active site. Residue 220-221 coordinates substrate; it reads GD. Ala-313 is a binding site for CoA.

It belongs to the thiolase-like superfamily. Chalcone/stilbene synthases family. As to quaternary structure, homodimer.

The enzyme catalyses (E)-4-coumaroyl-CoA + 3 malonyl-CoA + 3 H(+) = 2',4,4',6'-tetrahydroxychalcone + 3 CO2 + 4 CoA. It functions in the pathway secondary metabolite biosynthesis; flavonoid biosynthesis. In terms of biological role, the primary product of this enzyme is 4,2',4',6'-tetrahydroxychalcone (also termed naringenin-chalcone or chalcone) which can under specific conditions spontaneously isomerize into naringenin. This chain is Chalcone synthase 2 (CHS2), found in Oryza sativa subsp. japonica (Rice).